A 20-amino-acid chain; its full sequence is Collagenolytic protease 36 kDa A (20 aa).

The region spanning Ile-1–Asp-20 is the Peptidase S1 domain. Residues Ile-1 to Asp-20 form a disordered region.

It belongs to the peptidase S1 family.

It carries out the reaction Hydrolysis of proteins, with broad specificity for peptide bonds. Native collagen is cleaved about 75% of the length of the molecule from the N-terminus. Low activity on small molecule substrates of both trypsin and chymotrypsin.. Functionally, this enzyme is a serine protease capable of degrading the native triple helix of collagen. In Paralithodes camtschaticus (Red king crab), this protein is Collagenolytic protease 36 kDa A.